The sequence spans 311 residues: Uridine phosphorylase 1 (311 aa).

Phosphate contacts are provided by residues Gly61, Arg95, and 139 to 142 (RIGT). Residues 143 to 144 (SG) and 218 to 220 (QGR) each bind uridine.

The protein belongs to the PNP/UDP phosphorylase family. In terms of assembly, homodimer. Post-translationally, the N-terminus is blocked.

The catalysed reaction is uridine + phosphate = alpha-D-ribose 1-phosphate + uracil. It carries out the reaction 2'-deoxyuridine + phosphate = 2-deoxy-alpha-D-ribose 1-phosphate + uracil. It participates in pyrimidine metabolism; UMP biosynthesis via salvage pathway; uracil from uridine (phosphorylase route): step 1/1. Strongly inhibited by 2,2'-anhydro-5-ethyluridine, a competitive inhibitor. Its function is as follows. Catalyzes the reversible phosphorylytic cleavage of uridine to uracil and ribose-1-phosphate which can then be utilized as carbon and energy sources or in the rescue of pyrimidine bases for nucleotide synthesis. Shows broad substrate specificity and can also accept deoxyuridine and other analogous compounds. This is Uridine phosphorylase 1 from Mus musculus (Mouse).